Reading from the N-terminus, the 270-residue chain is Probable ribosomal RNA small subunit methyltransferase A (270 aa).

S-adenosyl-L-methionine-binding residues include His19, Leu21, Gly46, Glu67, Asp92, and Asn107.

This sequence belongs to the class I-like SAM-binding methyltransferase superfamily. rRNA adenine N(6)-methyltransferase family. RsmA subfamily.

The protein localises to the cytoplasm. Functionally, specifically dimethylates two adjacent adenosines in the loop of a conserved hairpin near the 3'-end of 16S rRNA in the 30S particle. May play a critical role in biogenesis of 30S subunits. The chain is Probable ribosomal RNA small subunit methyltransferase A from Methanococcoides burtonii (strain DSM 6242 / NBRC 107633 / OCM 468 / ACE-M).